The sequence spans 118 residues: Large ribosomal subunit protein bL20 (118 aa).

Belongs to the bacterial ribosomal protein bL20 family.

Binds directly to 23S ribosomal RNA and is necessary for the in vitro assembly process of the 50S ribosomal subunit. It is not involved in the protein synthesizing functions of that subunit. This Syntrophotalea carbinolica (strain DSM 2380 / NBRC 103641 / GraBd1) (Pelobacter carbinolicus) protein is Large ribosomal subunit protein bL20.